The primary structure comprises 86 residues: Antimicrobial peptide 2 (86 aa).

Positions 1 to 25 (MVNMKCVALIVIVMMAFMMVDPSMG) are cleaved as a signal peptide. Cystine bridges form between Cys-29–Cys-40, Cys-34–Cys-46, and Cys-39–Cys-53. A Chitin-binding type-1 domain is found at 29–53 (CVRGRCPSGMCCSQFGYCGKGPKYC). A propeptide spans 56-86 (ASTTVDHQADVAATKTAKNPTDAKLAGAGSP) (removed in mature form).

In terms of assembly, homodimer.

Chitin-binding protein with a defensive function against numerous chitin containing fungal pathogens. It is also a potent inhibitor of Gram-positive bacteria. In Amaranthus caudatus (Love-lies-bleeding), this protein is Antimicrobial peptide 2.